Consider the following 28-residue polypeptide: SADQPNSIPPRERKAGCKNFYWKGLTSC.

Cysteines 17 and 28 form a disulfide.

Belongs to the somatostatin family.

Its subcellular location is the secreted. Somatostatin inhibits the release of somatotropin. This is Somatostatin-2 (sst2) from Oreochromis niloticus (Nile tilapia).